Reading from the N-terminus, the 440-residue chain is Gap junction alpha-8 protein (440 aa).

An intramembrane segment occupies 2–12 (GDWSFLGNILE). Topologically, residues 13–21 (EVNEHSTVI) are cytoplasmic. The chain crosses the membrane as a helical span at residues 22 to 42 (GRVWLTVLFIFRILILGTAAE). Over 43–71 (FVWGDEQSDFVCNTQQPGCENVCYDEAFP) the chain is Extracellular. Disulfide bonds link Cys54–Cys201, Cys61–Cys195, and Cys65–Cys190. The helical transmembrane segment at 72 to 92 (ISHIRLWVLQIIFVSTPSLVY) threads the bilayer. At 93-161 (VGHAVHHVRM…GTLLRTYVCH (69 aa)) the chain is on the cytoplasmic side. The disordered stretch occupies residues 108-144 (EREAEELSQQSPGNGGERAPLAADQGSVKKSSSSSKG). A helical transmembrane segment spans residues 162–182 (IIFKTLFEVGFIVGHYFLYGF). Residues 183–210 (RILPLYRCSRWPCPNVVDCFVSRPTEKT) lie on the Extracellular side of the membrane. The chain crosses the membrane as a helical span at residues 211–231 (IFILFMLSVASVSLFLNILEM). Over 232 to 440 (SHLGLKKIRS…SRARSDDLTV (209 aa)) the chain is Cytoplasmic. A disordered region spans residues 334–440 (GAQEGVEEEQ…SRARSDDLTV (107 aa)). Basic and acidic residues-rich tracts occupy residues 353–365 (VGDK…RVST) and 375–405 (EEEK…ELTP). Residues 423–432 (LSRLSKASSR) are compositionally biased toward low complexity.

It belongs to the connexin family. Alpha-type (group II) subfamily. In terms of assembly, a hemichannel or connexon is composed of a hexamer of connexins. A functional gap junction is formed by the apposition of two hemichannels. Forms heteromeric channels with GJA3. As to expression, detected in eye lens (at protein level). Eye lens.

The protein localises to the cell membrane. The protein resides in the cell junction. Its subcellular location is the gap junction. Structural component of eye lens gap junctions. Gap junctions are dodecameric channels that connect the cytoplasm of adjoining cells. They are formed by the docking of two hexameric hemichannels, one from each cell membrane. Small molecules and ions diffuse from one cell to a neighboring cell via the central pore. This is Gap junction alpha-8 protein (GJA8) from Ovis aries (Sheep).